Here is a 156-residue protein sequence, read N- to C-terminus: Small ribosomal subunit protein uS7 (156 aa).

This sequence belongs to the universal ribosomal protein uS7 family. Part of the 30S ribosomal subunit. Contacts proteins S9 and S11.

Its function is as follows. One of the primary rRNA binding proteins, it binds directly to 16S rRNA where it nucleates assembly of the head domain of the 30S subunit. Is located at the subunit interface close to the decoding center, probably blocks exit of the E-site tRNA. The protein is Small ribosomal subunit protein uS7 of Aeromonas hydrophila subsp. hydrophila (strain ATCC 7966 / DSM 30187 / BCRC 13018 / CCUG 14551 / JCM 1027 / KCTC 2358 / NCIMB 9240 / NCTC 8049).